The sequence spans 497 residues: Glucose-6-phosphate 1-dehydrogenase (497 aa).

NADP(+) is bound by residues 15 to 22 (GASGDLSK), Arg-49, and Lys-153. Residues Lys-153, 183–187 (HYLGK), Glu-221, and Asp-240 contribute to the D-glucose 6-phosphate site. His-245 serves as the catalytic Proton acceptor. Arg-336 serves as a coordination point for NADP(+). Lys-339 contributes to the D-glucose 6-phosphate binding site. NADP(+) contacts are provided by Lys-345, Arg-349, and Arg-371. A D-glucose 6-phosphate-binding site is contributed by Gln-373. NADP(+) is bound by residues 379 to 381 (YLK), 399 to 401 (DLT), and Arg-466.

This sequence belongs to the glucose-6-phosphate dehydrogenase family.

It carries out the reaction D-glucose 6-phosphate + NADP(+) = 6-phospho-D-glucono-1,5-lactone + NADPH + H(+). It functions in the pathway carbohydrate degradation; pentose phosphate pathway; D-ribulose 5-phosphate from D-glucose 6-phosphate (oxidative stage): step 1/3. Its function is as follows. Catalyzes the rate-limiting step of the oxidative pentose-phosphate pathway, which represents a route for the dissimilation of carbohydrates besides glycolysis. The main function of this enzyme is to provide reducing power (NADPH) and pentose phosphates for fatty acid and nucleic acid synthesis. This is Glucose-6-phosphate 1-dehydrogenase (ZWF) from Kluyveromyces lactis (strain ATCC 8585 / CBS 2359 / DSM 70799 / NBRC 1267 / NRRL Y-1140 / WM37) (Yeast).